Here is a 328-residue protein sequence, read N- to C-terminus: Nucleotide-binding protein Blon_1085/BLIJ_1109 (328 aa).

The segment at 1-33 is disordered; sequence MSQQTTIRDTGEAAATNAPANSATSTSTPDNQP. The span at 13-29 shows a compositional bias: low complexity; sequence AAATNAPANSATSTSTP. 46–53 contacts ATP; that stretch reads GMSGAGRS. 101–104 contacts GTP; that stretch reads DVRS.

It belongs to the RapZ-like family.

In terms of biological role, displays ATPase and GTPase activities. This chain is Nucleotide-binding protein Blon_1085/BLIJ_1109, found in Bifidobacterium longum subsp. infantis (strain ATCC 15697 / DSM 20088 / JCM 1222 / NCTC 11817 / S12).